The following is a 189-amino-acid chain: Potassium-transporting ATPase KdpC subunit (189 aa).

The chain crosses the membrane as a helical span at residues Val10 to Ile30.

This sequence belongs to the KdpC family. The system is composed of three essential subunits: KdpA, KdpB and KdpC.

Its subcellular location is the cell inner membrane. Part of the high-affinity ATP-driven potassium transport (or Kdp) system, which catalyzes the hydrolysis of ATP coupled with the electrogenic transport of potassium into the cytoplasm. This subunit acts as a catalytic chaperone that increases the ATP-binding affinity of the ATP-hydrolyzing subunit KdpB by the formation of a transient KdpB/KdpC/ATP ternary complex. The protein is Potassium-transporting ATPase KdpC subunit of Janthinobacterium sp. (strain Marseille) (Minibacterium massiliensis).